We begin with the raw amino-acid sequence, 529 residues long: BAR/IMD domain-containing adapter protein 2-like 2 (529 aa).

The region spanning 1-239 (MAPEMDQFYR…HSPGLLGPVL (239 aa)) is the IMD domain. Disordered regions lie at residues 221 to 332 (EASR…GGAR) and 399 to 529 (NPLN…PLIR). Residues serine 231, serine 272, and serine 304 each carry the phosphoserine modification. Low complexity predominate over residues 301–317 (SASSLYSSSTQRSRSNS). Residues 321-331 (RPGGGGGGGGA) are compositionally biased toward gly residues. The 64-residue stretch at 329 to 392 (GGARRVRALV…PEAYVKPLDE (64 aa)) folds into the SH3 domain. A compositionally biased stretch (polar residues) spans 439-459 (GNSTASSDYWDGQSRSRTPSH). Residues 473–484 (PSSRRSSMGSMG) show a composition bias toward low complexity. Phosphoserine occurs at positions 479 and 482.

It localises to the cell membrane. The protein localises to the cell junction. The protein resides in the cytoplasmic vesicle membrane. Phosphoinositides-binding protein that induces the formation of planar or gently curved membrane structures. Binds to phosphoinositides, including to phosphatidylinositol 4,5-bisphosphate (PtdIns(4,5)P2) headgroups. There seems to be no clear preference for a specific phosphoinositide. This Bos taurus (Bovine) protein is BAR/IMD domain-containing adapter protein 2-like 2 (BAIAP2L2).